A 599-amino-acid polypeptide reads, in one-letter code: Afamin (599 aa).

A signal peptide spans Met-1–Thr-21. Albumin domains follow at residues Leu-22–Thr-210, Gln-211–Glu-403, and Thr-404–Asn-599. Asn-33 is a glycosylation site (N-linked (GlcNAc...) (complex) asparagine). Disulfide bonds link Cys-77–Cys-86, Cys-99–Cys-114, Cys-113–Cys-124, Cys-148–Cys-193, Cys-192–Cys-201, Cys-224–Cys-270, Cys-269–Cys-277, Cys-289–Cys-303, Cys-302–Cys-313, Cys-340–Cys-385, and Cys-384–Cys-393. Asn-109 carries N-linked (GlcNAc...) (complex) asparagine glycosylation. Positions Ala-215–Lys-319 are binding pocket for hydrophobic ligands. A glycan (N-linked (GlcNAc...) (complex) asparagine; atypical) is linked at Asn-383. A glycan (N-linked (GlcNAc...) (complex) asparagine) is linked at Asn-402. 6 disulfides stabilise this stretch: Cys-416–Cys-462, Cys-461–Cys-470, Cys-483–Cys-499, Cys-498–Cys-509, Cys-536–Cys-581, and Cys-580–Cys-589. Asn-488 is a glycosylation site (N-linked (GlcNAc...) asparagine).

It belongs to the ALB/AFP/VDB family. As to quaternary structure, forms a 1:1 complex with Wnt family members; interacts with WNT1, WNT2B, WNT3, WNT3A, WNT5A, WNT7A, WNT7B, WNT8, WNT9A, WNT9B, WNT10A and WNT10B. N-glycosylated; more than 90% of the glycans are sialylated. High level detected in plasma but also in extravascular fluids such as follicular and cerebrospinal fluids (at protein level).

Its subcellular location is the secreted. In terms of biological role, functions as a carrier for hydrophobic molecules in body fluids. Essential for the solubility and activity of lipidated Wnt family members, including WNT1, WNT2B, WNT3, WNT3A, WNT5A, WNT7A, WNT7B, WNT8, WNT9A, WNT9B, WNT10A and WNT10B. Binds vitamin E. May transport vitamin E in body fluids under conditions where the lipoprotein system is not sufficient. May be involved in the transport of vitamin E across the blood-brain barrier. This is Afamin (AFM) from Homo sapiens (Human).